We begin with the raw amino-acid sequence, 469 residues long: Tryptophan biosynthesis protein TrpCF (469 aa).

The segment at 1–271 is indole-3-glycerol phosphate synthase; it reads MSEQLSEHIS…LAVRKIVLGE (271 aa). An N-(5'-phosphoribosyl)anthranilate isomerase region spans residues 272-469; that stretch reads HKVCGLTHPD…QQVFQQLRNY (198 aa).

The protein in the N-terminal section; belongs to the TrpC family. In the C-terminal section; belongs to the TrpF family. As to quaternary structure, monomer.

The enzyme catalyses N-(5-phospho-beta-D-ribosyl)anthranilate = 1-(2-carboxyphenylamino)-1-deoxy-D-ribulose 5-phosphate. It carries out the reaction 1-(2-carboxyphenylamino)-1-deoxy-D-ribulose 5-phosphate + H(+) = (1S,2R)-1-C-(indol-3-yl)glycerol 3-phosphate + CO2 + H2O. The protein operates within amino-acid biosynthesis; L-tryptophan biosynthesis; L-tryptophan from chorismate: step 3/5. It functions in the pathway amino-acid biosynthesis; L-tryptophan biosynthesis; L-tryptophan from chorismate: step 4/5. In terms of biological role, bifunctional enzyme that catalyzes two sequential steps of tryptophan biosynthetic pathway. The first reaction is catalyzed by the isomerase, coded by the TrpF domain; the second reaction is catalyzed by the synthase, coded by the TrpC domain. The polypeptide is Tryptophan biosynthesis protein TrpCF (trpCF) (Vibrio cholerae serotype O1 (strain ATCC 39315 / El Tor Inaba N16961)).